A 515-amino-acid chain; its full sequence is Slowpoke-binding protein (515 aa).

Positions 1 to 31 (MFKFNKAAQQQRIDNRNSAVTGHDPFVRPPV) are disordered. Polar residues predominate over residues 7–20 (AAQQQRIDNRNSAV). A phosphoserine mark is found at serine 54 and serine 79. Residues 73–82 (SSNRSASSEQ) are compositionally biased toward polar residues. Residues 73–94 (SSNRSASSEQDNSDLSEHSEKS) are disordered. The interaction with Slo stretch occupies residues 191–203 (NWFLVTDASVRTD). The interval 483 to 503 (SLSEANSPCTPPSTPHDRRTG) is disordered.

In terms of assembly, interacts specifically with Slo; which activates Slo activity. Interacts with 14-3-3-zeta when phosphorylated. Forms a heterotetrameric complex containing phosphorylated Slob, Slo and 14-3-3-zeta, which represses Slo activity due to the indirect interaction between Slo and 14-3-3-zeta. Post-translationally, phosphorylated. Phosphorylation of Ser-54 and Ser-79 is required for the interaction with 14-3-3-zeta but not with that of Slo. In terms of tissue distribution, expressed in head. In larval brain, it is expressed in the mushroom body. Also expressed in larval muscles.

Its subcellular location is the cytoplasm. In terms of biological role, regulator of calcium-activated channel Slo. Increases or decreases the voltage sensitivity of Slo, depending on the absence or presence of 14-3-3-zeta in the complex, respectively. The protein is Slowpoke-binding protein (Slob) of Drosophila melanogaster (Fruit fly).